A 949-amino-acid chain; its full sequence is Zinc finger CCHC domain-containing protein 14 (949 aa).

Disordered stretches follow at residues 25 to 44, 59 to 92, 200 to 221, 236 to 262, 355 to 457, and 739 to 779; these read SSLNGGGGHGGKGAPGPGGA, EAPVSSVSNSLENALHTSAHSTEESLPKRPLGKH, STSSPPQQLQSPSPGNPSLSKV, AGIPSSQSGAQHHGQHPAGSAAPLPHC, KEKS…DKEK, and PESS…PQPA. Positions 28 to 43 are enriched in gly residues; that stretch reads NGGGGHGGKGAPGPGG. Residues 61–78 show a composition bias toward polar residues; it reads PVSSVSNSLENALHTSAH. Residues 200–219 show a composition bias toward low complexity; that stretch reads STSSPPQQLQSPSPGNPSLS. The span at 395–411 shows a compositional bias: basic and acidic residues; the sequence is HAAELRVEVEQPHHQLP. The span at 416–425 shows a compositional bias: low complexity; that stretch reads SSEYSSSSSS. The span at 431–457 shows a compositional bias: basic and acidic residues; the sequence is AREESSDSAEENDRRVEIHLESSDKEK. The segment at 906–923 adopts a CCHC-type zinc-finger fold; the sequence is LSCYNCGATGHRAQDCKQ.

This Homo sapiens (Human) protein is Zinc finger CCHC domain-containing protein 14 (ZCCHC14).